A 370-amino-acid polypeptide reads, in one-letter code: E3 ubiquitin-protein ligase E3D (370 aa).

Ala2 carries the N-acetylalanine modification. Residues 129–159 (PLPSENWSALVGEWCCHPDPFANKPLHPREN) carry the BRAT1-like motif motif. Cys144 is a Zn(2+) binding site. An interaction with UBE2C region spans residues 214–236 (QPSEGSFPNIPRSQFVQSVIARC). The interval 332–368 (LPSTTCLELLLILSRNNASLPLSLRQMNSFQLWCSHC) is HECT-like.

As to quaternary structure, interacts with UBE2C/UbcH10 (E2 ubiquitin-conjugating enzyme). In vitro, interacts with cyclin-B. Post-translationally, ubiquitinated by UBCH10 (E2 ubiquitin-conjugating enzyme).

The protein resides in the cytoplasm. It carries out the reaction S-ubiquitinyl-[E2 ubiquitin-conjugating enzyme]-L-cysteine + [acceptor protein]-L-lysine = [E2 ubiquitin-conjugating enzyme]-L-cysteine + N(6)-ubiquitinyl-[acceptor protein]-L-lysine.. The protein operates within protein modification; protein ubiquitination. Its function is as follows. E3 ubiquitin-protein ligase which accepts ubiquitin from specific E2 ubiquitin-conjugating enzymes, and transfers it to substrates, generally promoting their degradation by the proteasome. Independently of its E3 ubiquitin-protein ligase activity, acts as an inhibitor of CPSF3 endonuclease activity by blocking CPSF3 active site. The protein is E3 ubiquitin-protein ligase E3D (Ube3d) of Rattus norvegicus (Rat).